Reading from the N-terminus, the 252-residue chain is Hydroxyacylglutathione hydrolase (252 aa).

Zn(2+) is bound by residues H54, H56, D58, H59, H111, D128, and H166.

The protein belongs to the metallo-beta-lactamase superfamily. Glyoxalase II family. As to quaternary structure, monomer. Requires Zn(2+) as cofactor.

The enzyme catalyses an S-(2-hydroxyacyl)glutathione + H2O = a 2-hydroxy carboxylate + glutathione + H(+). It participates in secondary metabolite metabolism; methylglyoxal degradation; (R)-lactate from methylglyoxal: step 2/2. In terms of biological role, thiolesterase that catalyzes the hydrolysis of S-D-lactoyl-glutathione to form glutathione and D-lactic acid. The polypeptide is Hydroxyacylglutathione hydrolase (Vibrio parahaemolyticus serotype O3:K6 (strain RIMD 2210633)).